The chain runs to 892 residues: Alanine--tRNA ligase (892 aa).

The Zn(2+) site is built by His574, His578, Cys677, and His681.

This sequence belongs to the class-II aminoacyl-tRNA synthetase family. The cofactor is Zn(2+).

The protein localises to the cytoplasm. The enzyme catalyses tRNA(Ala) + L-alanine + ATP = L-alanyl-tRNA(Ala) + AMP + diphosphate. Functionally, catalyzes the attachment of alanine to tRNA(Ala) in a two-step reaction: alanine is first activated by ATP to form Ala-AMP and then transferred to the acceptor end of tRNA(Ala). Also edits incorrectly charged Ser-tRNA(Ala) and Gly-tRNA(Ala) via its editing domain. In Mesoplasma florum (strain ATCC 33453 / NBRC 100688 / NCTC 11704 / L1) (Acholeplasma florum), this protein is Alanine--tRNA ligase.